Reading from the N-terminus, the 813-residue chain is Phenylalanine--tRNA ligase beta subunit (813 aa).

Residues 42–151 enclose the tRNA-binding domain; that stretch reads AKDFNHVVIG…ADAPVGKAYA (110 aa). Positions 405 to 480 constitute a B5 domain; the sequence is VKKAPVDITI…RLNGYEHIPE (76 aa). Mg(2+) contacts are provided by Asp-458, Asp-464, Glu-467, and Glu-468. The 94-residue stretch at 720-813 folds into the FDX-ACB domain; the sequence is SKFPIVERDF…LKKNFDLSVR (94 aa).

The protein belongs to the phenylalanyl-tRNA synthetase beta subunit family. Type 1 subfamily. Tetramer of two alpha and two beta subunits. It depends on Mg(2+) as a cofactor.

The protein localises to the cytoplasm. It catalyses the reaction tRNA(Phe) + L-phenylalanine + ATP = L-phenylalanyl-tRNA(Phe) + AMP + diphosphate + H(+). The protein is Phenylalanine--tRNA ligase beta subunit of Bdellovibrio bacteriovorus (strain ATCC 15356 / DSM 50701 / NCIMB 9529 / HD100).